The chain runs to 261 residues: Transmembrane protein 106A (261 aa).

The span at 1–10 shows a compositional bias: polar residues; it reads MGKAFSQLTS. The disordered stretch occupies residues 1–22; that stretch reads MGKAFSQLTSQKDEDKSILPDN. The helical transmembrane segment at 93–113 threads the bilayer; the sequence is LSVFLAVTICLLIFSLTIFFL.

Belongs to the TMEM106 family.

The protein resides in the cell membrane. Functionally, activates macrophages and polarizes them into M1-like macrophages through the activation of the MAPK and NF-kappaB signaling pathway. Upon activation, up-regulates the expression of CD80, CD86, CD69 and MHC II on macrophages, and induces the release of pro-inflammatory cytokines such as TNF, IL1B, IL6, CCL2 and nitric oxide. May play a role in inhibition of proliferation and migration. The protein is Transmembrane protein 106A (Tmem106a) of Rattus norvegicus (Rat).